A 178-amino-acid chain; its full sequence is MTPKQLMNDEEIRRALKRIAHEIVERNAGANLVSLVGIHRRGVPLARRLAAMIAETEHVQVPVGELDIGLYRDDLHSRGPAPILGRTILPELGKRVVVLVDDVLYTGRTIRAALNELSDWGRPSAIQLAVLVDRGHRELPIRADFVGKNIPTAKNERVDVQLSEIDAAQDSVVIVQED.

Residues 97–109 (VVLVDDVLYTGRT) carry the PRPP-binding motif.

The protein belongs to the purine/pyrimidine phosphoribosyltransferase family. PyrR subfamily.

The catalysed reaction is UMP + diphosphate = 5-phospho-alpha-D-ribose 1-diphosphate + uracil. Its function is as follows. Regulates the transcription of the pyrimidine nucleotide (pyr) operon in response to exogenous pyrimidines. Also displays a weak uracil phosphoribosyltransferase activity which is not physiologically significant. This is Bifunctional protein PyrR from Herpetosiphon aurantiacus (strain ATCC 23779 / DSM 785 / 114-95).